The following is a 320-amino-acid chain: Serpentine receptor class gamma-15 (320 aa).

Helical transmembrane passes span 29–49 (TISY…TILV), 57–77 (GSSF…IVFI), 85–105 (FLYV…SSLI), 151–171 (VSLV…IISP), 197–217 (LFQS…TSVT), 240–260 (IYIS…AFCT), and 268–288 (LFTA…VILF).

The protein belongs to the nematode receptor-like protein srg family.

It localises to the membrane. The polypeptide is Serpentine receptor class gamma-15 (srg-15) (Caenorhabditis elegans).